An 82-amino-acid polypeptide reads, in one-letter code: Small ribosomal subunit protein bS16 (82 aa).

It belongs to the bacterial ribosomal protein bS16 family.

This Methylobacillus flagellatus (strain ATCC 51484 / DSM 6875 / VKM B-1610 / KT) protein is Small ribosomal subunit protein bS16.